The primary structure comprises 389 residues: S-adenosylmethionine synthase 3 (389 aa).

A Mg(2+)-binding site is contributed by E9. H15 provides a ligand contact to ATP. E43 contacts K(+). 2 residues coordinate L-methionine: E56 and Q99. ATP is bound by residues 167–169 (DGK), 235–238 (SGRF), D246, 252–253 (RK), A269, K273, and K277. An L-methionine-binding site is contributed by D246. K277 provides a ligand contact to L-methionine.

The protein belongs to the AdoMet synthase family. Homotetramer. It depends on Mn(2+) as a cofactor. Mg(2+) is required as a cofactor. The cofactor is Co(2+). Requires K(+) as cofactor.

The protein localises to the cytoplasm. The catalysed reaction is L-methionine + ATP + H2O = S-adenosyl-L-methionine + phosphate + diphosphate. Its pathway is amino-acid biosynthesis; S-adenosyl-L-methionine biosynthesis; S-adenosyl-L-methionine from L-methionine: step 1/1. Catalyzes the formation of S-adenosylmethionine from methionine and ATP. The reaction comprises two steps that are both catalyzed by the same enzyme: formation of S-adenosylmethionine (AdoMet) and triphosphate, and subsequent hydrolysis of the triphosphate. In Vitis vinifera (Grape), this protein is S-adenosylmethionine synthase 3 (METK3).